We begin with the raw amino-acid sequence, 369 residues long: Probable peptidoglycan glycosyltransferase FtsW (369 aa).

The next 8 membrane-spanning stretches (helical) occupy residues 11 to 31 (LLSV…SSSV), 48 to 68 (NFIH…VPIY), 77 to 97 (LILC…SNHG), 134 to 151 (TSTI…KLLL), 154 to 174 (PDFG…FLIG), 177 to 197 (FLFL…LIYF), 265 to 285 (LGYL…FQGM), and 306 to 326 (ISLL…GILP).

It belongs to the SEDS family. FtsW subfamily.

The protein localises to the cell inner membrane. It carries out the reaction [GlcNAc-(1-&gt;4)-Mur2Ac(oyl-L-Ala-gamma-D-Glu-L-Lys-D-Ala-D-Ala)](n)-di-trans,octa-cis-undecaprenyl diphosphate + beta-D-GlcNAc-(1-&gt;4)-Mur2Ac(oyl-L-Ala-gamma-D-Glu-L-Lys-D-Ala-D-Ala)-di-trans,octa-cis-undecaprenyl diphosphate = [GlcNAc-(1-&gt;4)-Mur2Ac(oyl-L-Ala-gamma-D-Glu-L-Lys-D-Ala-D-Ala)](n+1)-di-trans,octa-cis-undecaprenyl diphosphate + di-trans,octa-cis-undecaprenyl diphosphate + H(+). The protein operates within cell wall biogenesis; peptidoglycan biosynthesis. Functionally, peptidoglycan polymerase that is essential for cell division. The protein is Probable peptidoglycan glycosyltransferase FtsW of Riesia pediculicola (strain USDA).